Reading from the N-terminus, the 418-residue chain is NADH-quinone oxidoreductase subunit D (418 aa).

Belongs to the complex I 49 kDa subunit family. NDH-1 is composed of 14 different subunits. Subunits NuoB, C, D, E, F, and G constitute the peripheral sector of the complex.

Its subcellular location is the cell inner membrane. It catalyses the reaction a quinone + NADH + 5 H(+)(in) = a quinol + NAD(+) + 4 H(+)(out). In terms of biological role, NDH-1 shuttles electrons from NADH, via FMN and iron-sulfur (Fe-S) centers, to quinones in the respiratory chain. The immediate electron acceptor for the enzyme in this species is believed to be ubiquinone. Couples the redox reaction to proton translocation (for every two electrons transferred, four hydrogen ions are translocated across the cytoplasmic membrane), and thus conserves the redox energy in a proton gradient. The protein is NADH-quinone oxidoreductase subunit D of Bordetella avium (strain 197N).